A 215-amino-acid chain; its full sequence is Probable transaldolase (215 aa).

Residue Lys83 is the Schiff-base intermediate with substrate of the active site.

It belongs to the transaldolase family. Type 3B subfamily.

Its subcellular location is the cytoplasm. The catalysed reaction is D-sedoheptulose 7-phosphate + D-glyceraldehyde 3-phosphate = D-erythrose 4-phosphate + beta-D-fructose 6-phosphate. Its pathway is carbohydrate degradation; pentose phosphate pathway; D-glyceraldehyde 3-phosphate and beta-D-fructose 6-phosphate from D-ribose 5-phosphate and D-xylulose 5-phosphate (non-oxidative stage): step 2/3. Functionally, transaldolase is important for the balance of metabolites in the pentose-phosphate pathway. In Pelotomaculum thermopropionicum (strain DSM 13744 / JCM 10971 / SI), this protein is Probable transaldolase.